A 158-amino-acid polypeptide reads, in one-letter code: S-ribosylhomocysteine lyase (158 aa).

Positions 56, 60, and 125 each coordinate Fe cation.

It belongs to the LuxS family. As to quaternary structure, homodimer. Fe cation serves as cofactor.

The catalysed reaction is S-(5-deoxy-D-ribos-5-yl)-L-homocysteine = (S)-4,5-dihydroxypentane-2,3-dione + L-homocysteine. Its function is as follows. Involved in the synthesis of autoinducer 2 (AI-2) which is secreted by bacteria and is used to communicate both the cell density and the metabolic potential of the environment. The regulation of gene expression in response to changes in cell density is called quorum sensing. Catalyzes the transformation of S-ribosylhomocysteine (RHC) to homocysteine (HC) and 4,5-dihydroxy-2,3-pentadione (DPD). In Leuconostoc mesenteroides subsp. mesenteroides (strain ATCC 8293 / DSM 20343 / BCRC 11652 / CCM 1803 / JCM 6124 / NCDO 523 / NBRC 100496 / NCIMB 8023 / NCTC 12954 / NRRL B-1118 / 37Y), this protein is S-ribosylhomocysteine lyase.